The primary structure comprises 238 residues: Cysteine-rich venom protein pseudechetoxin-like (238 aa).

The N-terminal stretch at 1-19 is a signal peptide; it reads MIAFIVLLSLAAVLQQSSG. Residues 20–28 constitute a propeptide that is removed on maturation; it reads TVDFASESS. In terms of domain architecture, SCP spans 38–164; that stretch reads VDKHNALRRS…STKYLYVCQY (127 aa). 8 cysteine pairs are disulfide-bonded: Cys75/Cys153, Cys92/Cys165, Cys148/Cys162, Cys184/Cys191, Cys187/Cys196, Cys200/Cys233, Cys209/Cys227, and Cys218/Cys231. The ShKT domain occupies 200 to 233; it reads CKHEDDFSNCKALAKNSKCQTAWIKSKCPATCFC.

This sequence belongs to the CRISP family. As to expression, expressed by the venom gland.

It is found in the secreted. Its function is as follows. Blocks olfactory (CNGA2) and retinal (CNGA1) CNG channel currents. Does not affect neither depolarization- nor caffeine-induced contraction of smooth muscle. This is Cysteine-rich venom protein pseudechetoxin-like from Hoplocephalus stephensii (Stephens's banded snake).